Reading from the N-terminus, the 43-residue chain is uncharacterized protein (43 aa).

This is an uncharacterized protein from Schizosaccharomyces pombe (strain 972 / ATCC 24843) (Fission yeast).